The chain runs to 636 residues: Chaperone protein HtpG (636 aa).

The segment at 1–342 (MSSETLEFQA…AHDLSLNISR (342 aa)) is a; substrate-binding. Positions 343–558 (ELLQQDRQIQ…AHDVTPTLEK (216 aa)) are b. Residues 559–636 (MYRAMGHEVP…ILAERLARTL (78 aa)) are c.

The protein belongs to the heat shock protein 90 family. In terms of assembly, homodimer.

The protein localises to the cytoplasm. Its function is as follows. Molecular chaperone. Has ATPase activity. In Salinispora tropica (strain ATCC BAA-916 / DSM 44818 / JCM 13857 / NBRC 105044 / CNB-440), this protein is Chaperone protein HtpG.